A 322-amino-acid polypeptide reads, in one-letter code: Transmembrane protein 171 (322 aa).

4 helical membrane-spanning segments follow: residues 22 to 42, 57 to 77, 112 to 132, and 159 to 179; these read IFFL…LSIF, IVLK…VILA, LIFG…GIWV, and FLSL…FFVV. The interval 223–322 is disordered; it reads PPPYFPESSA…LGAPSDASPP (100 aa). The segment covering 228-241 has biased composition (low complexity); sequence PESSAAAPSPGANS. 2 stretches are compositionally biased toward polar residues: residues 242–267 and 279–289; these read LHQI…NQGA and ISGQGSSSERS.

It is found in the membrane. In Mus musculus (Mouse), this protein is Transmembrane protein 171 (Tmem171).